Consider the following 300-residue polypeptide: 11-beta-hydroxysteroid dehydrogenase 1 (300 aa).

Topologically, residues 1 to 7 are cytoplasmic; that stretch reads MAFLKKY. A helical; Signal-anchor for type II membrane protein transmembrane segment spans residues 8-24; that stretch reads LLTILMVFLAYYYYSAN. The Lumenal portion of the chain corresponds to 25 to 300; sequence EKFRPEMLQG…SNEKLYGRWA (276 aa). Residues 41-67, 92-93, and 119-123 each bind NADP(+); these read GASK…TARS, SM, and NHVLY. A substrate-binding site is contributed by Ser-170. Tyr-183 acts as the Proton acceptor in catalysis. An NADP(+)-binding site is contributed by 183 to 187; sequence YSASK. Asn-207 carries an N-linked (GlcNAc...) asparagine glycan. 218-222 provides a ligand contact to NADP(+); that stretch reads IDTET.

Belongs to the short-chain dehydrogenases/reductases (SDR) family. In terms of assembly, homodimer. As to expression, widely expressed in all peripheral tissues, with highest expression in liver, followed by kidney and lung, and very low expression in heart, lung, spleen, stomach, small intestine, colon, skin, skeletal muscle, and ovary.

It is found in the endoplasmic reticulum membrane. It catalyses the reaction an 11beta-hydroxysteroid + NADP(+) = an 11-oxosteroid + NADPH + H(+). The catalysed reaction is cortisone + NADPH + H(+) = cortisol + NADP(+). The enzyme catalyses corticosterone + NADP(+) = 11-dehydrocorticosterone + NADPH + H(+). It carries out the reaction a 7beta-hydroxysteroid + NADP(+) = a 7-oxosteroid + NADPH + H(+). It catalyses the reaction 7-oxocholesterol + NADPH + H(+) = 7beta-hydroxycholesterol + NADP(+). The catalysed reaction is chenodeoxycholate + NADP(+) = 7-oxolithocholate + NADPH + H(+). The enzyme catalyses 7-oxolithocholate + NADPH + H(+) = ursodeoxycholate + NADP(+). It carries out the reaction glycochenodeoxycholate + NADP(+) = 7-oxoglycolithocholate + NADPH + H(+). It catalyses the reaction taurochenodeoxycholate + NADP(+) = 7-oxotaurolithocholate + NADPH + H(+). The catalysed reaction is tauroursodeoxycholate + NADP(+) = 7-oxotaurolithocholate + NADPH + H(+). The enzyme catalyses glycoursodeoxycholate + NADP(+) = 7-oxoglycolithocholate + NADPH + H(+). It carries out the reaction 7-oxopregnenolone + NADPH + H(+) = 7beta-hydroxypregnenolone + NADP(+). It catalyses the reaction 3beta,7alpha-dihydroxyandrost-5-en-17-one + NADP(+) = 3beta-hydroxy-5-androstene-7,17-dione + NADPH + H(+). The catalysed reaction is 3beta-hydroxy-5-androstene-7,17-dione + NADPH + H(+) = 3beta,7beta-dihydroxyandrost-5-en-17-one + NADP(+). The enzyme catalyses 3beta-hydroxy-5alpha-androstane-7,17-dione + NADPH + H(+) = 3beta,7beta-dihydroxy-5alpha-androstan-17-one + NADP(+). Controls the reversible conversion of biologically active glucocorticoids such as cortisone to cortisol, and 11-dehydrocorticosterone to corticosterone in the presence of NADP(H). Participates in the corticosteroid receptor-mediated anti-inflammatory response, as well as metabolic and homeostatic processes. Bidirectional in vitro, predominantly functions as a reductase in vivo, thereby increasing the concentration of active glucocorticoids. It has broad substrate specificity, besides glucocorticoids, it accepts other steroid and sterol substrates. Interconverts 7-oxo- and 7-hydroxy-neurosteroids such as 7-oxopregnenolone and 7beta-hydroxypregnenolone, 7-oxodehydroepiandrosterone (3beta-hydroxy-5-androstene-7,17-dione) and 7beta-hydroxydehydroepiandrosterone (3beta,7beta-dihydroxyandrost-5-en-17-one), among others. Catalyzes the stereo-specific conversion of the major dietary oxysterol, 7-ketocholesterol (7-oxocholesterol), into the more polar 7-beta-hydroxycholesterol metabolite. 7-oxocholesterol is one of the most important oxysterols, it participates in several events such as induction of apoptosis, accumulation in atherosclerotic lesions, lipid peroxidation, and induction of foam cell formation. Mediates the 7-oxo reduction of 7-oxolithocholate mainly to chenodeoxycholate, and to a lesser extent to ursodeoxycholate, both in its free form and when conjugated to glycine or taurine, providing a link between glucocorticoid activation and bile acid metabolism. Catalyzes the synthesis of 7-beta-25-dihydroxycholesterol from 7-oxo-25-hydroxycholesterol in vitro, which acts as a ligand for the G-protein-coupled receptor (GPCR) Epstein-Barr virus-induced gene 2 (EBI2) and may thereby regulate immune cell migration. The sequence is that of 11-beta-hydroxysteroid dehydrogenase 1 (HSD11B1) from Cavia porcellus (Guinea pig).